The sequence spans 72 residues: Protein kish-A (72 aa).

A signal peptide spans 1–26 (MSAIFNFQSLLIVILLLICTCAYLRS). The Extracellular portion of the chain corresponds to 27–53 (LVPNLLDKNKTGVLGIFWKCARIGERK). An N-linked (GlcNAc...) asparagine glycan is attached at N35. Residues 54 to 71 (SPYVAVCCVVMAFSILFM) traverse the membrane as a helical segment. Residue Q72 is a topological domain, cytoplasmic.

This sequence belongs to the KISH family.

It is found in the golgi apparatus membrane. Its function is as follows. Involved in the early part of the secretory pathway. The polypeptide is Protein kish-A (tmem167a) (Xenopus laevis (African clawed frog)).